The sequence spans 445 residues: Tubulin beta-3 chain (445 aa).

GTP is bound by residues Gln-11, Glu-69, Ser-138, Gly-142, Thr-143, Gly-144, Asn-204, and Asn-226. Glu-69 is a binding site for Mg(2+). The disordered stretch occupies residues 421–445 (EYQQYQDATADEEEEYDEEEEEEAA). Positions 429 to 445 (TADEEEEYDEEEEEEAA) are enriched in acidic residues.

It belongs to the tubulin family. In terms of assembly, dimer of alpha and beta chains. A typical microtubule is a hollow water-filled tube with an outer diameter of 25 nm and an inner diameter of 15 nM. Alpha-beta heterodimers associate head-to-tail to form protofilaments running lengthwise along the microtubule wall with the beta-tubulin subunit facing the microtubule plus end conferring a structural polarity. Microtubules usually have 13 protofilaments but different protofilament numbers can be found in some organisms and specialized cells. The cofactor is Mg(2+).

The protein localises to the cytoplasm. It localises to the cytoskeleton. In terms of biological role, tubulin is the major constituent of microtubules, a cylinder consisting of laterally associated linear protofilaments composed of alpha- and beta-tubulin heterodimers. Microtubules grow by the addition of GTP-tubulin dimers to the microtubule end, where a stabilizing cap forms. Below the cap, tubulin dimers are in GDP-bound state, owing to GTPase activity of alpha-tubulin. The sequence is that of Tubulin beta-3 chain (TUBB3) from Triticum aestivum (Wheat).